We begin with the raw amino-acid sequence, 2078 residues long: Nascent polypeptide-associated complex subunit alpha, muscle-specific form (2078 aa).

4 disordered regions span residues 1–21, 37–96, 595–614, and 732–1944; these read MPGEATETVPATEQELPQPQA, ALGQ…LGTA, LGEPLPIGKPASSMTSPLGV, and KSVP…KAMS. Polar residues-rich tracts occupy residues 9-21 and 60-75; these read VPATEQELPQPQA and AANQASPFPSPSTIAS. Over residues 775-786 the composition is skewed to low complexity; it reads SGASATASSKGT. Positions 837–847 are enriched in polar residues; sequence PENSLSFQGSK. The residue at position 917 (serine 917) is a Phosphoserine. Positions 933–1020 are enriched in pro residues; that stretch reads SPSPKGAPTP…PPAVTPPSPK (88 aa). A compositionally biased stretch (low complexity) spans 1045-1067; sequence GSPAATPLPKGAPTTPAATLPSP. Pro residues predominate over residues 1080–1113; sequence PTPPAATPPSPKGGPATPSPKGAPMPPAATPPSP. Positions 1114–1130 are enriched in low complexity; that stretch reads KGGLATPPHKGAPTTPA. Pro residues-rich tracts occupy residues 1131-1147 and 1154-1170; these read ATPPSPKGGLATPPPKG. The residue at position 1181 (serine 1181) is a Phosphoserine. 3 stretches are compositionally biased toward low complexity: residues 1183–1199, 1206–1222, and 1229–1245; these read KGGLATPSPKGAPTTPA. 2 stretches are compositionally biased toward pro residues: residues 1246 to 1270 and 1292 to 1344; these read ATPPSPKGGPATPPPKGAPTPPAAT and VTPP…PSPK. Low complexity predominate over residues 1345–1366; that stretch reads GTPTLPATTPSSKGGPTTPSSK. Serine 1397 and serine 1474 each carry phosphoserine. The span at 1470 to 1481 shows a compositional bias: pro residues; the sequence is VTPPSPKEPPAP. Positions 1485–1507 are enriched in low complexity; sequence ATSSSPKKAPATPAPMGAPTLPA. Positions 1611–1625 are enriched in pro residues; it reads KEAPTPPAVTPPSPE. Over residues 1626–1637 the composition is skewed to low complexity; it reads KGPATPAPKGTP. Positions 1647–1656 are enriched in polar residues; the sequence is LKDSPTSPAS. Over residues 1744–1756 the composition is skewed to basic and acidic residues; that stretch reads DSSKTAKGKDASH. The span at 1794–1811 shows a compositional bias: pro residues; that stretch reads PSPPVSLPLAPSPVPTLP. The PXLXP motif lies at 1841 to 1845; sequence LPLIP. Residues 1876–1891 show a composition bias toward polar residues; it reads SAKQPVTKNNKGSGTE. Positions 1892–1905 are enriched in acidic residues; that stretch reads SDSDESVPELEEQD. Phosphoserine; by ILK1 is present on serine 1906. The segment covering 1907-1920 has biased composition (low complexity); it reads TQATTQQAQLAAAA. The required for DNA-binding stretch occupies residues 1932–1943; it reads QSRSEKKARKAM. The region spanning 1933 to 1998 is the NAC-A/B domain; that stretch reads SRSEKKARKA…AKIEDLSQQA (66 aa). Residue serine 1995 is modified to Phosphoserine. An N6-acetyllysine; alternate modification is found at lysine 2005. Lysine 2005 is covalently cross-linked (Glycyl lysine isopeptide (Lys-Gly) (interchain with G-Cter in SUMO2); alternate). Residue threonine 2022 is modified to Phosphothreonine; by GSK3-beta. Residue threonine 2024 is modified to Phosphothreonine. Residues serine 2029, serine 2049, serine 2054, and serine 2066 each carry the phosphoserine modification. The UBA domain maps to 2039–2078; the sequence is VEVKDIELVMSQANVSRAKAVRALKNNSNDIVNAIMELTM.

Interacts (via PXLXP motif) with the muscle-restricted histone methyltransferase SMYD1 (via MYND-type zinc finger).

Its subcellular location is the cytoplasm. The protein resides in the nucleus. In terms of biological role, cardiac- and muscle-specific transcription factor. May act to regulate the expression of genes involved in the development of myotubes. Plays a critical role in ventricular cardiomyocyte expansion and regulates postnatal skeletal muscle growth and regeneration. Involved in the organized assembly of thick and thin filaments of myofibril sarcomeres. The polypeptide is Nascent polypeptide-associated complex subunit alpha, muscle-specific form (NACA) (Homo sapiens (Human)).